Reading from the N-terminus, the 2387-residue chain is Paternally-expressed gene 3 protein (2387 aa).

The region spanning 44–126 (HQRFRNFLYV…ALLEDYEAMY (83 aa)) is the SCAN box domain. Disordered regions lie at residues 127–194 (EPED…RDLA), 262–305 (DGHS…ICEA), 321–371 (ARSS…AFGG), and 392–423 (RYHF…EARR). Basic and acidic residues-rich tracts occupy residues 160–179 (SERE…DRWP), 291–305 (PETK…ICEA), 321–364 (ARSS…ERGP), and 404–423 (HDPR…EARR). The C2H2-type 1 zinc finger occupies 451–473 (YVCDECGRSFAVISEFVEHQIVH). The segment at 492–542 (SEAQSRPEGARRSEGAQAAGLAEHRGGQAQEHLRGSGDEEQDEPFLPSPTF) is disordered. Basic and acidic residues predominate over residues 513 to 528 (AEHRGGQAQEHLRGSG). C2H2-type zinc fingers lie at residues 555–577 (YECK…QKIH) and 610–632 (YECK…QKTH). The C2H2-type 4; degenerate zinc-finger motif lies at 668–690 (YDFREGGDAFGRSSDFMEHQKIH). Disordered regions lie at residues 704–747 (PLLH…EARG), 764–797 (FRPP…ESPY), and 820–858 (DHLA…NIER). Residues 711-720 (MPGSQKSHTI) show a composition bias toward polar residues. Basic residues predominate over residues 846–856 (HQKARAKKKNI). A C2H2-type 5 zinc finger spans residues 884-906 (YECLECGEFFVRSSELAEHQKIH). 57 consecutive repeat copies span residues 965–973 (PAQTSYAVE), 974–982 (PAQTSYAEE), 983–991 (PAQTSYTEA), 1001–1009 (PAQTSCIEE), 1010–1018 (PAQTSYTNP), 1028–1036 (PAQTSYTEA), 1046–1054 (PAQTSCIEE), 1055–1063 (PAQTSYTNP), 1073–1081 (PAQTSYTEA), 1091–1099 (PAQTNYTEE), 1109–1117 (PSQTSCIEE), 1118–1126 (PAQTSYTDP), 1136–1144 (PAQTSYTQE), 1145–1153 (PAQTSCTEE), 1154–1162 (PAQTSCTEE), 1163–1171 (PAQTSYTQE), 1172–1180 (PAQTSYTKE), 1190–1198 (PAQTSCIEE), 1199–1207 (PAQTNYTKE), 1217–1225 (PAQTSYTDP), 1235–1243 (PAQTNYTVE), 1253–1261 (PSQTSCIEE), 1280–1288 (PAQTSCTEE), 1289–1297 (PAQTSYTQE), 1298–1306 (PAQTSCTEE), 1307–1315 (PAQTSCTEE), 1316–1324 (PAQTSYTQE), 1325–1333 (PAQTSCTEE), 1334–1342 (PAQTSYTQE), 1343–1351 (PAQTSCTEE), 1352–1360 (PAQTSYTEE), 1361–1369 (PAQTSYTEE), 1370–1378 (PAQTSYTQE), 1379–1387 (PAQTSCTEE), 1388–1396 (PAQTSYTEE), 1397–1405 (PAQTSYTEE), 1406–1414 (PAQTSYTQE), 1415–1423 (PAQTSYTEE), 1424–1432 (PAQTSYTEE), 1433–1441 (PAQTSYAQE), 1442–1450 (PAQTSYAEE), 1451–1459 (PAQTSYAEE), 1460–1468 (PAQTSYAEE), 1469–1477 (PAQTSYTQE), 1478–1486 (PAQTNYTEE), 1496–1504 (PAQTSYAEE), 1505–1513 (PAQTSYPEE), 1514–1522 (PAQTSYAEE), 1523–1531 (PAQTSYAEE), 1532–1540 (PAQTSYPEE), 1541–1549 (PAQTSYTEE), 1550–1558 (PAQTSYAKE), 1559–1567 (PAQTSYPEE), 1568–1576 (PAQTSYAEE), 1577–1585 (PAQTSYAEE), 1586–1594 (PAQTSYAEE), and 1595–1603 (PAQTSYSEE). 2 stretches are compositionally biased toward polar residues: residues 965-989 (PAQT…TSYT) and 1001-1020 (PAQT…NPAA). The segment at 965-1603 (PAQTSYAVEP…EPAQTSYSEE (639 aa)) is 37 X 9 AA repeat of P-A-Q-T-X-Y-X-X-E. Positions 965–1651 (PAQTSYAVEP…RPDMPRNQPR (687 aa)) are disordered. A compositionally biased stretch (polar residues) spans 1046–1079 (PAQTSCIEEPAQTSYTNPAAETSYTEEPAQTSYT). 5 stretches are compositionally biased toward polar residues: residues 1107–1178 (EEPS…TSYT), 1190–1206 (PAQT…NYTK), 1217–1242 (PAQT…NYTV), 1251–1484 (EEPS…TNYT), and 1496–1601 (PAQT…TSYS). A C2H2-type 6; degenerate zinc finger spans residues 1859–1881 (NECKECGECFATVEDLGRHQKIY). Residues 1900–1921 (LGLDGSPEEELEEQEEPEEPED) are disordered. The segment covering 1905-1921 (SPEEELEEQEEPEEPED) has biased composition (acidic residues). C2H2-type zinc fingers lie at residues 1924–1946 (YGCK…QKVH), 1980–2002 (YECP…QKVH), 2040–2062 (PQCQ…ARGH), 2097–2119 (YECE…MRVH), and 2148–2170 (YECK…QKLH). The tract at residues 2059 to 2102 (ARGHAGEGLPDQGQGGAGAAGPGPAPTEPQQDPGEEQRYECETC) is disordered. The disordered stretch occupies residues 2204 to 2322 (NVEAAEPEVE…DCGECGETFP (119 aa)). Composition is skewed to acidic residues over residues 2208-2228 (AEPE…EVEA) and 2257-2311 (EQPD…EEPY). 2 C2H2-type zinc fingers span residues 2312-2334 (YDCG…LTAH) and 2363-2385 (FKCD…QNTH).

It belongs to the krueppel C2H2-type zinc-finger protein family. Homodimer. Interacts with SIAH1A and SIAH2. Interacts with TRAF2. As to expression, expressed at high levels in the cerebellum and at moderate levels in the testis and ovary.

It is found in the nucleus. The protein resides in the cytoplasm. Its function is as follows. Induces apoptosis in cooperation with SIAH1A. Acts as a mediator between p53/TP53 and BAX in a neuronal death pathway that is activated by DNA damage. Acts synergistically with TRAF2 and inhibits TNF induced apoptosis through activation of NF-kappa-B. The chain is Paternally-expressed gene 3 protein (PEG3) from Bos taurus (Bovine).